Here is a 467-residue protein sequence, read N- to C-terminus: Ribulose bisphosphate carboxylase large chain (467 aa).

An N6,N6,N6-trimethyllysine modification is found at lysine 5. Residues asparagine 114 and threonine 164 each coordinate substrate. The active-site Proton acceptor is lysine 166. Residue lysine 168 participates in substrate binding. Residues lysine 192, aspartate 194, and glutamate 195 each coordinate Mg(2+). An N6-carboxylysine modification is found at lysine 192. Histidine 285 functions as the Proton acceptor in the catalytic mechanism. Residues arginine 286, histidine 318, and serine 370 each contribute to the substrate site.

The protein belongs to the RuBisCO large chain family. Type I subfamily. In terms of assembly, heterohexadecamer of 8 large chains and 8 small chains; disulfide-linked. The disulfide link is formed within the large subunit homodimers. Mg(2+) serves as cofactor. Post-translationally, the disulfide bond which can form in the large chain dimeric partners within the hexadecamer appears to be associated with oxidative stress and protein turnover.

Its subcellular location is the plastid. The protein resides in the chloroplast. The enzyme catalyses 2 (2R)-3-phosphoglycerate + 2 H(+) = D-ribulose 1,5-bisphosphate + CO2 + H2O. The catalysed reaction is D-ribulose 1,5-bisphosphate + O2 = 2-phosphoglycolate + (2R)-3-phosphoglycerate + 2 H(+). RuBisCO catalyzes two reactions: the carboxylation of D-ribulose 1,5-bisphosphate, the primary event in carbon dioxide fixation, as well as the oxidative fragmentation of the pentose substrate in the photorespiration process. Both reactions occur simultaneously and in competition at the same active site. The protein is Ribulose bisphosphate carboxylase large chain of Eriodictyon californicum (California yerba santa).